Consider the following 142-residue polypeptide: Large ribosomal subunit protein uL13 (142 aa).

It belongs to the universal ribosomal protein uL13 family. As to quaternary structure, part of the 50S ribosomal subunit.

In terms of biological role, this protein is one of the early assembly proteins of the 50S ribosomal subunit, although it is not seen to bind rRNA by itself. It is important during the early stages of 50S assembly. The protein is Large ribosomal subunit protein uL13 of Tolumonas auensis (strain DSM 9187 / NBRC 110442 / TA 4).